We begin with the raw amino-acid sequence, 386 residues long: Sphingosine 1-phosphate receptor 4 (386 aa).

Topologically, residues 1–56 are extracellular; that stretch reads MNISTWSTLVTPESCHRLAASGHSLLIVLHYNHSGRLASRGGSEDGGGLGMLRGPS. 2 N-linked (GlcNAc...) asparagine glycosylation sites follow: Asn2 and Asn32. A helical membrane pass occupies residues 57 to 77; it reads VAAGCLVVLENAMVLAAIAIY. At 78–87 the chain is on the cytoplasmic side; it reads MRSRRWVYYC. A helical membrane pass occupies residues 88-108; that stretch reads LLNITLSDLLTGLAYVVNVLL. Topologically, residues 109–120 are extracellular; that stretch reads SGTRTFQLSPVH. A helical transmembrane segment spans residues 121-141; sequence WFLREGLLFMALAASTFSLLF. Over 142–163 the chain is Cytoplasmic; it reads TAGERFATMVRVAESGATKTSR. Residues 164 to 184 traverse the membrane as a helical segment; it reads VYGCIGLCWLLAAILGLLPLL. Over 185–208 the chain is Extracellular; the sequence is GWNCVCAFPRCSSLLPLYSKGYVL. Residues 209–229 traverse the membrane as a helical segment; the sequence is FCVVVFALILVAILSLYGAIF. Topologically, residues 230–254 are cytoplasmic; the sequence is RVVRANGQKSPRPPARRKSRRLLNT. A helical transmembrane segment spans residues 255–275; the sequence is VLMILVAFVVCWGPLFGLLLA. At 276 to 290 the chain is on the extracellular side; that stretch reads DIFGSNVWAQEYLRG. A helical transmembrane segment spans residues 291–311; the sequence is MDWILALAVFNSAINPLIYSF. Residues 312 to 386 lie on the Cytoplasmic side of the membrane; it reads RSREVQRAVL…LSSISSVRST (75 aa). Cys325 carries S-palmitoyl cysteine lipidation.

It belongs to the G-protein coupled receptor 1 family. Specifically expressed in fetal and adult lymphoid and hematopoietic tissue. Expressed in lung, spleen, thymus and lymph node but absent in other non-lymphatic tissue. Coexpressed with GNA15 at the same relative levels in all tissues examined, with the highest levels in adult spleen and lung.

The protein localises to the cell membrane. In terms of biological role, receptor for the lysosphingolipid sphingosine 1-phosphate (S1P). S1P is a bioactive lysophospholipid that elicits diverse physiological effect on most types of cells and tissues. May be involved in cell migration processes that are specific for lymphocytes. This is Sphingosine 1-phosphate receptor 4 (S1pr4) from Mus musculus (Mouse).